We begin with the raw amino-acid sequence, 586 residues long: CTP synthase 2 (586 aa).

One can recognise a Glutamine amidotransferase type-1 domain in the interval S300–H554. Active-site for GATase activity residues include C399, H526, and E528. S568, S571, and S574 each carry phosphoserine.

Belongs to the CTP synthase family.

It carries out the reaction UTP + L-glutamine + ATP + H2O = CTP + L-glutamate + ADP + phosphate + 2 H(+). It participates in pyrimidine metabolism; CTP biosynthesis via de novo pathway; CTP from UDP: step 2/2. Its function is as follows. Catalyzes the ATP-dependent amination of UTP to CTP with either L-glutamine or ammonia as the source of nitrogen. Constitutes the rate-limiting enzyme in the synthesis of cytosine nucleotides. The sequence is that of CTP synthase 2 (Ctps2) from Mus musculus (Mouse).